We begin with the raw amino-acid sequence, 622 residues long: Zinc finger protein ZIC 5 (622 aa).

4 disordered regions span residues 50-171 (MHLH…KGHS), 190-223 (HGAPLGGEQRSGSSSPQHPTPPPHPAGMFISASG), 232-251 (GSALFPALHDSPGAPGGHPL), and 321-349 (PGPHLQHHAPPPAPPPAPAPHPHHPHLPG). The span at 126–151 (APPPPAPPLPPSQSSSPPPPPPPPPA) shows a compositional bias: pro residues. Over residues 329–340 (APPPAPPPAPAP) the composition is skewed to pro residues. The C2H2-type 1; degenerate zinc finger occupies 422-444 (EDCPREGKPFKAKYKLINHIRVH). 3 C2H2-type zinc fingers span residues 450–474 (FPCPFPGCGKVFARSENLKIHKRTH), 480–504 (FKCEFDGCDRKFANSSDRKKHSHVH), and 510–534 (YYCKIRGCDKSYTHPSSLRKHMKIH). Disordered regions lie at residues 531–573 (MKIH…STLS) and 590–622 (APSHLHTPSSNGTTSESEDEEMYGNPEVMRTIH). 3 positions are modified to phosphoserine: Ser-537, Ser-541, and Ser-559. The span at 595 to 604 (HTPSSNGTTS) shows a compositional bias: polar residues.

Belongs to the GLI C2H2-type zinc-finger protein family.

The protein localises to the nucleus. Functionally, essential for neural crest development, converting cells from an epidermal fate to a neural crest cell fate. Binds to DNA. In Mus musculus (Mouse), this protein is Zinc finger protein ZIC 5 (Zic5).